A 476-amino-acid chain; its full sequence is Glutamate--tRNA ligase 1 (476 aa).

A 'HIGH' region motif is present at residues 9 to 19; the sequence is PSPTGFLHIGG. Residues 238-242 carry the 'KMSKS' region motif; the sequence is KLSKR. Lys-241 serves as a coordination point for ATP.

Belongs to the class-I aminoacyl-tRNA synthetase family. Glutamate--tRNA ligase type 1 subfamily. As to quaternary structure, monomer.

The protein localises to the cytoplasm. It carries out the reaction tRNA(Glu) + L-glutamate + ATP = L-glutamyl-tRNA(Glu) + AMP + diphosphate. Functionally, catalyzes the attachment of glutamate to tRNA(Glu) in a two-step reaction: glutamate is first activated by ATP to form Glu-AMP and then transferred to the acceptor end of tRNA(Glu). This Bartonella tribocorum (strain CIP 105476 / IBS 506) protein is Glutamate--tRNA ligase 1.